We begin with the raw amino-acid sequence, 486 residues long: Differentially expressed in FDCP 8 homolog (486 aa).

Residues 1-26 (MSSWCSSEDAHNQSSTPSTRSRKSSW) form a disordered region. 2 consecutive Phorbol-ester/DAG-type zinc fingers follow at residues 160 to 212 (GHEF…KRVC) and 393 to 459 (IHTV…SLNC).

It belongs to the DEF8 family.

This chain is Differentially expressed in FDCP 8 homolog, found in Caenorhabditis elegans.